Consider the following 312-residue polypeptide: Dihydroorotate dehydrogenase B (NAD(+)), catalytic subunit (312 aa).

FMN-binding positions include Ser-23 and 47–48 (KA). Residues Lys-47 and 71 to 75 (NAIGL) contribute to the substrate site. The FMN site is built by Asn-103 and Asn-131. Asn-131 is a substrate binding site. Cys-134 functions as the Nucleophile in the catalytic mechanism. Lys-171 and Ile-197 together coordinate FMN. 198-199 (NT) contacts substrate. FMN contacts are provided by residues Gly-223, 249–250 (GG), and 271–272 (GT).

The protein belongs to the dihydroorotate dehydrogenase family. Type 1 subfamily. In terms of assembly, heterotetramer of 2 PyrK and 2 PyrD type B subunits. FMN is required as a cofactor.

Its subcellular location is the cytoplasm. It catalyses the reaction (S)-dihydroorotate + NAD(+) = orotate + NADH + H(+). The protein operates within pyrimidine metabolism; UMP biosynthesis via de novo pathway; orotate from (S)-dihydroorotate (NAD(+) route): step 1/1. In terms of biological role, catalyzes the conversion of dihydroorotate to orotate with NAD(+) as electron acceptor. This is Dihydroorotate dehydrogenase B (NAD(+)), catalytic subunit (pyrDB) from Streptococcus pneumoniae serotype 4 (strain ATCC BAA-334 / TIGR4).